The primary structure comprises 317 residues: Aspartate carbamoyltransferase catalytic subunit (317 aa).

2 residues coordinate carbamoyl phosphate: R65 and T66. K93 lines the L-aspartate pocket. Carbamoyl phosphate contacts are provided by R115, H145, and Q148. Positions 178 and 233 each coordinate L-aspartate. Carbamoyl phosphate is bound by residues G274 and P275.

It belongs to the aspartate/ornithine carbamoyltransferase superfamily. ATCase family. As to quaternary structure, heterododecamer (2C3:3R2) of six catalytic PyrB chains organized as two trimers (C3), and six regulatory PyrI chains organized as three dimers (R2).

It carries out the reaction carbamoyl phosphate + L-aspartate = N-carbamoyl-L-aspartate + phosphate + H(+). It functions in the pathway pyrimidine metabolism; UMP biosynthesis via de novo pathway; (S)-dihydroorotate from bicarbonate: step 2/3. Its function is as follows. Catalyzes the condensation of carbamoyl phosphate and aspartate to form carbamoyl aspartate and inorganic phosphate, the committed step in the de novo pyrimidine nucleotide biosynthesis pathway. The sequence is that of Aspartate carbamoyltransferase catalytic subunit from Bordetella bronchiseptica (strain ATCC BAA-588 / NCTC 13252 / RB50) (Alcaligenes bronchisepticus).